The sequence spans 1178 residues: Mediator of RNA polymerase II transcription subunit 14 (1178 aa).

A compositionally biased stretch (polar residues) spans 1-12 (MDNSVHNNSNTT). 2 disordered regions span residues 1 to 50 (MDNS…PITV) and 1064 to 1178 (LAGT…VVLD). 2 stretches are compositionally biased toward low complexity: residues 1074–1112 (PTQI…QGAA) and 1119–1164 (HQLQ…AQQR).

This sequence belongs to the Mediator complex subunit 14 family. In terms of assembly, component of the Mediator complex.

The protein resides in the nucleus. Functionally, component of the Mediator complex, a coactivator involved in the regulated transcription of nearly all RNA polymerase II-dependent genes. Mediator functions as a bridge to convey information from gene-specific regulatory proteins to the basal RNA polymerase II transcription machinery. Mediator is recruited to promoters by direct interactions with regulatory proteins and serves as a scaffold for the assembly of a functional preinitiation complex with RNA polymerase II and the general transcription factors. This Chaetomium globosum (strain ATCC 6205 / CBS 148.51 / DSM 1962 / NBRC 6347 / NRRL 1970) (Soil fungus) protein is Mediator of RNA polymerase II transcription subunit 14 (RGR1).